The chain runs to 227 residues: Ras-related protein Rab-3C (227 aa).

Serine 39, glycine 42, lysine 43, threonine 44, serine 45, threonine 56, serine 57, serine 61, and threonine 62 together coordinate GTP. Threonine 44 is a binding site for Mg(2+). The Switch 1 signature appears at 53-66 (DSFTSAFVSTVGID). Positions 62 and 85 each coordinate Mg(2+). Threonine 86 carries the post-translational modification Phosphothreonine; by LRRK2. Residues 86-104 (TAGQERYRTITTAYYRGAM) carry the Switch 2 motif. GTP-binding residues include glycine 88, asparagine 143, lysine 144, aspartate 146, alanine 174, and lysine 175. Serine 196 and serine 198 each carry phosphoserine. Residues 202-227 (DPAITAAKQSTRLKETPPPPQPNCGC) form a disordered region. Threonine 206 carries the phosphothreonine modification. Positions 217-227 (TPPPPQPNCGC) are enriched in pro residues. 2 S-geranylgeranyl cysteine lipidation sites follow: cysteine 225 and cysteine 227. At cysteine 227 the chain carries Cysteine methyl ester.

It belongs to the small GTPase superfamily. Rab family. In terms of assembly, interacts with RIMS1, RIMS2, RPH3A and RPH3AL. Interacts with GDI2, CHM and CHML; phosphorylation at Thr-86 disrupts these interactions. Interacts with MADD (via uDENN domain); the GTP-bound form is preferred for interaction. Mg(2+) serves as cofactor. In terms of processing, phosphorylation of Thr-86 in the switch II region by LRRK2 prevents the association of RAB regulatory proteins, including CHM, CHML and RAB GDP dissociation inhibitor GDI2.

Its subcellular location is the cell membrane. The catalysed reaction is GTP + H2O = GDP + phosphate + H(+). Regulated by guanine nucleotide exchange factors (GEFs) which promote the exchange of bound GDP for free GTP. Regulated by GTPase activating proteins (GAPs) which increase the GTP hydrolysis activity. Inhibited by GDP dissociation inhibitors (GDIs) which prevent Rab-GDP dissociation. The small GTPases Rab are key regulators of intracellular membrane trafficking, from the formation of transport vesicles to their fusion with membranes. Rabs cycle between an inactive GDP-bound form and an active GTP-bound form that is able to recruit to membranes different sets of downstream effectors directly responsible for vesicle formation, movement, tethering and fusion. The protein is Ras-related protein Rab-3C of Mus musculus (Mouse).